The sequence spans 119 residues: Immunoglobulin heavy variable 3-15 (119 aa).

The first 19 residues, 1-19 (MEFGLSWIFLAAILKGVQC), serve as a signal peptide directing secretion. The tract at residues 20–44 (EVQLVESGGGLVKPGGSLRLSCAAS) is framework-1. In terms of domain architecture, Ig-like spans 20 to 119 (EVQLVESGGG…EDTAVYYCTT (100 aa)). Cysteines 41 and 117 form a disulfide. The tract at residues 45–52 (GFTFSNAW) is complementarity-determining-1. The segment at 53–69 (MSWVRQAPGKGLEWVGR) is framework-2. The interval 70 to 79 (IKSKTDGGTT) is complementarity-determining-2. A framework-3 region spans residues 80-117 (DYAAPVKGRFTISRDDSKNTLYLQMNSLKTEDTAVYYC). The complementarity-determining-3 stretch occupies residues 118 to 119 (TT).

Immunoglobulins are composed of two identical heavy chains and two identical light chains; disulfide-linked.

The protein resides in the secreted. It is found in the cell membrane. In terms of biological role, v region of the variable domain of immunoglobulin heavy chains that participates in the antigen recognition. Immunoglobulins, also known as antibodies, are membrane-bound or secreted glycoproteins produced by B lymphocytes. In the recognition phase of humoral immunity, the membrane-bound immunoglobulins serve as receptors which, upon binding of a specific antigen, trigger the clonal expansion and differentiation of B lymphocytes into immunoglobulins-secreting plasma cells. Secreted immunoglobulins mediate the effector phase of humoral immunity, which results in the elimination of bound antigens. The antigen binding site is formed by the variable domain of one heavy chain, together with that of its associated light chain. Thus, each immunoglobulin has two antigen binding sites with remarkable affinity for a particular antigen. The variable domains are assembled by a process called V-(D)-J rearrangement and can then be subjected to somatic hypermutations which, after exposure to antigen and selection, allow affinity maturation for a particular antigen. This chain is Immunoglobulin heavy variable 3-15, found in Homo sapiens (Human).